Here is a 113-residue protein sequence, read N- to C-terminus: Defense protein 2 (113 aa).

Belongs to the attacin/sarcotoxin-2 family.

The protein localises to the secreted. Functionally, has antibacterial activity against both Gram-positive and Gram-negative bacteria. This chain is Defense protein 2, found in Lonomia obliqua (Moth).